A 624-amino-acid polypeptide reads, in one-letter code: Multicopper oxidase elcG (624 aa).

A signal peptide spans 1–18; it reads MACNILNFLTGLLSLSST. Plastocyanin-like domains follow at residues 48 to 160 and 216 to 373; these read PGRA…IERG and CMDA…TIRI. N-linked (GlcNAc...) asparagine glycosylation occurs at asparagine 65. Residues histidine 96, histidine 98, histidine 140, and histidine 142 each coordinate Cu cation. N-linked (GlcNAc...) asparagine glycosylation is found at asparagine 271, asparagine 296, and asparagine 464. One can recognise a Plastocyanin-like 3 domain in the interval 474–603; the sequence is FLFQDPSQIE…GGMGVVILDG (130 aa). Residues histidine 511, histidine 514, histidine 516, histidine 585, cysteine 586, histidine 587, and histidine 591 each contribute to the Cu cation site.

It belongs to the multicopper oxidase family.

It participates in secondary metabolite biosynthesis. Multicopper oxidase; part of the gene cluster that mediates the biosynthesis of elsinochrome C, a perelyenequinone phytotoxin structurally similar to cercosporin. The first step of elsinochrome C biosynthesis is performed by the polyketide synthase elcA which catalyzes the formation of nor-toralactone. The starter unit acyltransferase (SAT) domain of elcA initiates polyketide extension by the selective utilization of acetyl-CoA, which is elongated to the heptaketide in the beta-ketoacyl synthase (KS) domain by successive condensations with six malonyl units introduced by the malonyl acyltransferase (MAT) domain. The product template (PT) domain catalyzes C4-C9 and C2-C11 aldol cyclizations and dehydrations to a trihydroxynaphthalene, which is thought to be delivered to the thioesterase (TE) domain for product release. The bifunctional enzyme elcB then methylates nor-toralactone to toralactone before conducting an unusual oxidative aromatic ring opening. The next step in perylenequinone biosynthesis is an O-methylation at the nascent OH-6 of the elcB product performed by the O-methyltransferase elcD. The oxidative coupling of the two monomeric naphthol units in perylenequinone biosynthesis is catalyzed by the FAD-dependent monooxygenase elcE and the multicopper oxidase elcG. ElcG might catalyze the first intermolecular coupling in a regio- and stereo-selective manner via a phenol radical coupling mechanism and the elcE could forge the second C-C bond intramolecularly via a hydride transfer mechanism. The fasciclin domain-containing protein elcF might also play a role duting this step. The last piece of the puzzle in the biosynthesis of elsinochrome C is the additional annulation by enolate coupling to afford the dihydrobenzo(ghi)perylenequinone system, catalyzed by the FAD-dependent monooxygenase elcH. The polypeptide is Multicopper oxidase elcG (Phaeosphaeria nodorum (strain SN15 / ATCC MYA-4574 / FGSC 10173) (Glume blotch fungus)).